Reading from the N-terminus, the 289-residue chain is MLTRIVLFAITNIAVLILASIVMSLLGVNPTQMSGLLVMALILGFGGSLISLLMSKAIAKHTTGAYVIEQPRNPSQRWLLDTVRRQAEIVGIGMPEVAIYEGPEINAFATGADRNNALVAVSTGLLQNMSQDEAEAVLGHEIAHVANGDMVTMALLQGVLNTFVIVLARVVGGFIDSLLSGNRGGGRGVAYYGIVLVLELLFGLFATIITMWFSRRREFRADEGGAYLAGRNKMIAALERLGINHGQSTLPTQVQAFGIYGGIGEGLRKLFLSHPPLSERIAALRMARE.

Transmembrane regions (helical) follow at residues 5–25 (IVLF…VMSL) and 33–53 (MSGL…ISLL). Residue His140 coordinates Zn(2+). Residue Glu141 is part of the active site. His144 provides a ligand contact to Zn(2+). Helical transmembrane passes span 155-175 (LLQG…GGFI) and 193-213 (GIVL…TMWF). Glu218 serves as a coordination point for Zn(2+).

Belongs to the peptidase M48B family. It depends on Zn(2+) as a cofactor.

The protein localises to the cell inner membrane. This is Protease HtpX from Xylella fastidiosa (strain M23).